The sequence spans 414 residues: Dihydroorotase (414 aa).

Positions 57 and 59 each coordinate Zn(2+). Residues 59 to 61 (HLR) and Asn-91 each bind substrate. Zn(2+) contacts are provided by Lys-135, His-164, His-204, and Asp-272. Lys-135 is modified (N6-carboxylysine). Asp-272 is a catalytic residue. Substrate is bound by residues His-276 and 286-287 (AG).

This sequence belongs to the metallo-dependent hydrolases superfamily. DHOase family. Class I DHOase subfamily. Zn(2+) is required as a cofactor.

It carries out the reaction (S)-dihydroorotate + H2O = N-carbamoyl-L-aspartate + H(+). The protein operates within pyrimidine metabolism; UMP biosynthesis via de novo pathway; (S)-dihydroorotate from bicarbonate: step 3/3. In terms of biological role, catalyzes the reversible cyclization of carbamoyl aspartate to dihydroorotate. This Pyrococcus furiosus (strain ATCC 43587 / DSM 3638 / JCM 8422 / Vc1) protein is Dihydroorotase.